A 204-amino-acid chain; its full sequence is UPF0056 membrane protein TC_0241 (204 aa).

The next 6 helical transmembrane spans lie at 8–28 (LTLL…FVAL), 46–66 (IFAL…FRLL), 68–88 (VSLP…AINM), 107–127 (IFYP…STLG), 138–158 (LVLG…FFSS), and 176–196 (FGIS…STAF).

It belongs to the UPF0056 (MarC) family.

The protein localises to the cell membrane. The polypeptide is UPF0056 membrane protein TC_0241 (Chlamydia muridarum (strain MoPn / Nigg)).